Consider the following 218-residue polypeptide: Adenylate kinase (218 aa).

Position 12–17 (12–17) interacts with ATP; the sequence is GAGKGT. The interval 32–61 is NMP; it reads STGDIFRKNISENTPLGIEAKSYMDNGQLV. Residues T33, R38, 59 to 61, 87 to 90, and Q94 contribute to the AMP site; these read QLV and GFPR. The LID stretch occupies residues 128 to 165; it reads GRRVCPSCGASYHIKFNPPTNDGKCDLCGSDVIQRKDD. R129 contacts ATP. Zn(2+) contacts are provided by C132 and C135. 138 to 139 is an ATP binding site; it reads SY. C152 and C155 together coordinate Zn(2+). AMP is bound by residues R162 and R173. Q201 contacts ATP.

The protein belongs to the adenylate kinase family. As to quaternary structure, monomer.

It localises to the cytoplasm. The enzyme catalyses AMP + ATP = 2 ADP. It participates in purine metabolism; AMP biosynthesis via salvage pathway; AMP from ADP: step 1/1. In terms of biological role, catalyzes the reversible transfer of the terminal phosphate group between ATP and AMP. Plays an important role in cellular energy homeostasis and in adenine nucleotide metabolism. This chain is Adenylate kinase, found in Clostridium perfringens (strain 13 / Type A).